A 238-amino-acid chain; its full sequence is Synapse differentiation-inducing gene protein 1-like (238 aa).

3 disordered regions span residues Met1–Pro24, Lys78–Ala111, and Glu126–Thr155. The Extracellular segment spans residues Met1–Leu162. The span at Gly133–Asp151 shows a compositional bias: acidic residues. The chain crosses the membrane as a helical span at residues Gly163–Phe183. Over Ser184–Arg205 the chain is Cytoplasmic. A helical membrane pass occupies residues Ala206 to Val226. Residues Ala227 to Ser238 are Extracellular-facing.

Belongs to the CD225/Dispanin family.

Its subcellular location is the membrane. It localises to the golgi apparatus. The protein resides in the cis-Golgi network. This chain is Synapse differentiation-inducing gene protein 1-like (SYNDIG1L), found in Bos taurus (Bovine).